A 201-amino-acid polypeptide reads, in one-letter code: Imidazole glycerol phosphate synthase subunit HisH (201 aa).

A Glutamine amidotransferase type-1 domain is found at 2–201 (KVVILDTGCA…ARLLKNFLEM (200 aa)). C77 (nucleophile) is an active-site residue. Active-site residues include H183 and E185.

In terms of assembly, heterodimer of HisH and HisF.

The protein localises to the cytoplasm. The catalysed reaction is 5-[(5-phospho-1-deoxy-D-ribulos-1-ylimino)methylamino]-1-(5-phospho-beta-D-ribosyl)imidazole-4-carboxamide + L-glutamine = D-erythro-1-(imidazol-4-yl)glycerol 3-phosphate + 5-amino-1-(5-phospho-beta-D-ribosyl)imidazole-4-carboxamide + L-glutamate + H(+). The enzyme catalyses L-glutamine + H2O = L-glutamate + NH4(+). The protein operates within amino-acid biosynthesis; L-histidine biosynthesis; L-histidine from 5-phospho-alpha-D-ribose 1-diphosphate: step 5/9. Its function is as follows. IGPS catalyzes the conversion of PRFAR and glutamine to IGP, AICAR and glutamate. The HisH subunit catalyzes the hydrolysis of glutamine to glutamate and ammonia as part of the synthesis of IGP and AICAR. The resulting ammonia molecule is channeled to the active site of HisF. This is Imidazole glycerol phosphate synthase subunit HisH from Photorhabdus laumondii subsp. laumondii (strain DSM 15139 / CIP 105565 / TT01) (Photorhabdus luminescens subsp. laumondii).